The primary structure comprises 214 residues: Response regulator GacA (214 aa).

The 117-residue stretch at Lys3–Phe119 folds into the Response regulatory domain. A 4-aspartylphosphate modification is found at Asp54. Residues Asn143–Gly208 enclose the HTH luxR-type domain. The segment at residues Val167–Tyr186 is a DNA-binding region (H-T-H motif).

Phosphorylated by LemA.

In terms of biological role, forms part of a two-component regulatory system GacA/GacA(LemA). May be involved in lesion formation, swarming and in the production of extracellular protease, syringomycin and N-acyl-L-homoserine lactone (acyl-HSL). This is Response regulator GacA (gacA) from Pseudomonas syringae pv. syringae (strain B728a).